We begin with the raw amino-acid sequence, 110 residues long: Iron-sulfur cluster assembly protein CyaY (110 aa).

This sequence belongs to the frataxin family.

In terms of biological role, involved in iron-sulfur (Fe-S) cluster assembly. May act as a regulator of Fe-S biogenesis. The protein is Iron-sulfur cluster assembly protein CyaY of Azotobacter vinelandii (strain DJ / ATCC BAA-1303).